The sequence spans 1088 residues: RNA-directed RNA polymerase (1088 aa).

The region spanning 501-687 (LSYGDVTRFL…AKRYIAGGKI (187 aa)) is the RdRp catalytic domain.

The protein belongs to the reoviridae RNA-directed RNA polymerase family. In terms of assembly, interacts with VP3 (Potential). Interacts with VP2; this interaction activates VP1. Interacts with NSP5; this interaction is probably necessary for the formation of functional virus factories. Interacts with NSP2; this interaction is weak. The cofactor is Mg(2+).

It is found in the virion. The enzyme catalyses RNA(n) + a ribonucleoside 5'-triphosphate = RNA(n+1) + diphosphate. Its function is as follows. RNA-directed RNA polymerase that is involved in both transcription and genome replication. Together with VP3 capping enzyme, forms an enzyme complex positioned near the channels situated at each of the five-fold vertices of the core. Following infection, the outermost layer of the virus is lost, leaving a double-layered particle (DLP) made up of the core and VP6 shell. VP1 then catalyzes the transcription of fully conservative plus-strand genomic RNAs that are extruded through the DLP's channels into the cytoplasm where they function as mRNAs for translation of viral proteins. One copy of each of the viral (+)RNAs is also recruited during core assembly, together with newly synthesized polymerase complexes and VP2. The polymerase of these novo-formed particles catalyzes the synthesis of complementary minus-strands leading to dsRNA formation. To do so, the polymerase specifically recognizes and binds 4 bases 5'-UGUG-3' in the conserved 3'-sequence of plus-strand RNA templates. VP2 presumably activates the autoinhibited VP1-RNA complex to coordinate packaging and genome replication. Once dsRNA synthesis is complete, the polymerase switches to the transcriptional mode, thus providing secondary transcription. This is RNA-directed RNA polymerase from Homo sapiens (Human).